The following is a 434-amino-acid chain: 4-hydroxy-3-methylbut-2-en-1-yl diphosphate synthase (flavodoxin) (434 aa).

Residues 1 to 15 (MQSEAQSPRSSQICS) are compositionally biased toward polar residues. Residues 1-24 (MQSEAQSPRSSQICSTEPVFGGHQ) form a disordered region. Residues Cys-322, Cys-325, Cys-368, and Glu-375 each coordinate [4Fe-4S] cluster.

It belongs to the IspG family. The cofactor is [4Fe-4S] cluster.

It carries out the reaction (2E)-4-hydroxy-3-methylbut-2-enyl diphosphate + oxidized [flavodoxin] + H2O + 2 H(+) = 2-C-methyl-D-erythritol 2,4-cyclic diphosphate + reduced [flavodoxin]. It participates in isoprenoid biosynthesis; isopentenyl diphosphate biosynthesis via DXP pathway; isopentenyl diphosphate from 1-deoxy-D-xylulose 5-phosphate: step 5/6. Converts 2C-methyl-D-erythritol 2,4-cyclodiphosphate (ME-2,4cPP) into 1-hydroxy-2-methyl-2-(E)-butenyl 4-diphosphate. The chain is 4-hydroxy-3-methylbut-2-en-1-yl diphosphate synthase (flavodoxin) from Burkholderia cenocepacia (strain ATCC BAA-245 / DSM 16553 / LMG 16656 / NCTC 13227 / J2315 / CF5610) (Burkholderia cepacia (strain J2315)).